Here is a 154-residue protein sequence, read N- to C-terminus: Endoribonuclease YbeY (154 aa).

Residues His-113, His-117, and His-123 each contribute to the Zn(2+) site.

Belongs to the endoribonuclease YbeY family. Zn(2+) is required as a cofactor.

Its subcellular location is the cytoplasm. Single strand-specific metallo-endoribonuclease involved in late-stage 70S ribosome quality control and in maturation of the 3' terminus of the 16S rRNA. The polypeptide is Endoribonuclease YbeY (Vibrio cholerae serotype O1 (strain ATCC 39315 / El Tor Inaba N16961)).